The chain runs to 378 residues: UPF0754 membrane protein BCA_0919 (378 aa).

2 helical membrane-spanning segments follow: residues 1–21 (MNIW…GGFT) and 357–377 (YLGA…LLFL).

The protein belongs to the UPF0754 family.

It is found in the cell membrane. This Bacillus cereus (strain 03BB102) protein is UPF0754 membrane protein BCA_0919.